Here is a 376-residue protein sequence, read N- to C-terminus: Protein RecA (376 aa).

79–86 contacts ATP; sequence GPESSGKT. The tract at residues 357–376 is disordered; the sequence is AAARAATDKPVETKGANAAA.

It belongs to the RecA family.

It localises to the cytoplasm. Its function is as follows. Can catalyze the hydrolysis of ATP in the presence of single-stranded DNA, the ATP-dependent uptake of single-stranded DNA by duplex DNA, and the ATP-dependent hybridization of homologous single-stranded DNAs. It interacts with LexA causing its activation and leading to its autocatalytic cleavage. This is Protein RecA from Synechococcus sp. (strain CC9902).